We begin with the raw amino-acid sequence, 542 residues long: Bifunctional pantoate ligase/cytidylate kinase (542 aa).

The segment at 1–280 (MHWLRTVAAL…VGQTRLIDNL (280 aa)) is pantoate--beta-alanine ligase. Position 28–35 (28–35 (MGSLHEGH)) interacts with ATP. His-35 serves as the catalytic Proton donor. Gln-59 serves as a coordination point for (R)-pantoate. Beta-alanine is bound at residue Gln-59. 150–153 (GQKD) contributes to the ATP binding site. A (R)-pantoate-binding site is contributed by Gln-156. ATP-binding positions include Val-179 and 187 to 190 (CSSR). The cytidylate kinase stretch occupies residues 281 to 542 (LLSPEQGDPL…ERSGPARLDQ (262 aa)). Positions 287 to 311 (GDPLPERVQHAAPPSSGTTSPPRRP) are disordered.

This sequence in the N-terminal section; belongs to the pantothenate synthetase family. It in the C-terminal section; belongs to the cytidylate kinase family. Type 1 subfamily.

Its subcellular location is the cytoplasm. It catalyses the reaction (R)-pantoate + beta-alanine + ATP = (R)-pantothenate + AMP + diphosphate + H(+). It carries out the reaction CMP + ATP = CDP + ADP. The enzyme catalyses dCMP + ATP = dCDP + ADP. It participates in cofactor biosynthesis; (R)-pantothenate biosynthesis; (R)-pantothenate from (R)-pantoate and beta-alanine: step 1/1. Functionally, catalyzes the condensation of pantoate with beta-alanine in an ATP-dependent reaction via a pantoyl-adenylate intermediate. Catalyzes the transfer of a phosphate group from ATP to either CMP or dCMP to form CDP or dCDP and ADP, respectively. The chain is Bifunctional pantoate ligase/cytidylate kinase from Synechococcus sp. (strain JA-2-3B'a(2-13)) (Cyanobacteria bacterium Yellowstone B-Prime).